The following is a 342-amino-acid chain: tRNA N6-adenosine threonylcarbamoyltransferase (342 aa).

Fe cation contacts are provided by His111 and His115. Residues 134-138 (LVSGG), Asp167, Gly180, and Asn277 contribute to the substrate site. Asp305 serves as a coordination point for Fe cation.

Belongs to the KAE1 / TsaD family. Fe(2+) serves as cofactor.

The protein resides in the cytoplasm. The catalysed reaction is L-threonylcarbamoyladenylate + adenosine(37) in tRNA = N(6)-L-threonylcarbamoyladenosine(37) in tRNA + AMP + H(+). Required for the formation of a threonylcarbamoyl group on adenosine at position 37 (t(6)A37) in tRNAs that read codons beginning with adenine. Is involved in the transfer of the threonylcarbamoyl moiety of threonylcarbamoyl-AMP (TC-AMP) to the N6 group of A37, together with TsaE and TsaB. TsaD likely plays a direct catalytic role in this reaction. The sequence is that of tRNA N6-adenosine threonylcarbamoyltransferase from Cellvibrio japonicus (strain Ueda107) (Pseudomonas fluorescens subsp. cellulosa).